The following is a 259-amino-acid chain: HTH-type quorum sensing-dependent transcriptional regulator VjbR (259 aa).

The segment at 76 to 179 is C12-HSL binding; that stretch reads KNYFAIDPVF…AGIIHGTVCG (104 aa). Residues 183–248 enclose the HTH luxR-type domain; sequence ANSVASLLTP…SAVATALSLG (66 aa). Residues 207 to 226 constitute a DNA-binding region (H-T-H motif); it reads DGEIAEILSIARWTVVTYLQ.

Its function is as follows. Transcriptional regulator involved in the global control of Brucella gene expression. Mediates the effects of the quorum sensing autoinducer C12-HSL (N-dodecanoyl-homoserine lactone) on a large and diverse number of genes. This Brucella ovis (strain ATCC 25840 / 63/290 / NCTC 10512) protein is HTH-type quorum sensing-dependent transcriptional regulator VjbR (vjbR).